Reading from the N-terminus, the 355-residue chain is 6-aminohexanoate-oligomer endohydrolase (355 aa).

T267 acts as the Nucleophile in catalysis.

It belongs to the peptidase S58 family. In terms of assembly, heterotetramer composed of 4 alpha/beta heterodimers. Exists at the monomer/dimer/trimer equilibrium in aqueous solution. Post-translationally, expressed as an inactive precursor that is cleaved autocatalytically at Asn266/Thr267 to generate an active enzyme composed of an alpha subunit and a beta subunit.

It catalyses the reaction [N-(6-aminohexanoyl)]n + H2O = [N-(6-aminohexanoyl)]n-x + [N-(6-aminohexanoyl)]x.. Its pathway is xenobiotic degradation; nylon-6 oligomer degradation. Involved in the degradation of nylon-6 oligomers. Degrades cyclic and linear oligomers of 6-aminohexanoate (Ahx) with a degree of polymerization greater than three by an endo-type mode. Cannot use Ahx cyclic dimer or the Ahx linear dimer. This is 6-aminohexanoate-oligomer endohydrolase from Paenarthrobacter ureafaciens.